The following is an 870-amino-acid chain: MGLRTSSGSPLVKPKLYKTSASNVISLAEKQDRFLNLGELTDLNTYFSSGNRRLDIAKVISLNANLIISRAADRIFVGGSPLSFLERPQAAVTLTSDQASSTSIQSTKGLGNGNIFQNFFKSTSEAPTGFKPINVVRYGSSNMKKSIRDLDWFLRYVTYAIVAGDTSILIVNTKGLRELIDKACSSSAAIVALKEMKNVSLSLFNYDIESQNIVRLYFNTLVSEFESPASSSKVRKRNSLDLQGLAIPDIYLVAADKSLRYVMKPNLSNTEKAQVIKACYRQVFERDIAKAYGLSLLELESKLKNLQISVKEFIRALGKSTLYRKNFYEGFTNSRVVELAFRHFMGRGLSSLQEFRKYFAILSSNGLDALIDSIINNSEYAEYFGEETVPYIRGYGQEAQECRNWGSQFALFKYSAPFRTIPQFITLFADYTQLPPSQHCYGKLNDPLNIQFGAIFKNSYVNEQSRPVLFPRGSRRILVYKGAGIFNQLGSPNALEKPPSNVSIAKWSKETDLNFILNAAYLRVFGRYVYEEEKIALRPLENEFKRRSISVRDFVGQLAKSDVFRSLYWSRLYICKSIEYIHIRLLGRPTYGRTEINNYFDIVYKSGFYAFVDSLVNSREYIKCFGNDTVPYDRYSTPEAVSSSIFRLSFINSVSYKSLKPKIEKFIQLGVARDAKSLSSLNSKVFQGVSQARSQKRVFKVSDYSNVMNLRIVFYAALRQVFERNIEPYIKGGEFKDIESLFLSGKISVRELIKEIGSSSLYRKEFYIPFPNTQVIEFCTKHFLGRAPKNQSEIRYYNQVLAVQGLREMINYMINSKEYLSVFGDDIVPYRRFPTLPAANFPNTQRLYSRQTKQNRNIVVPSFSGLLNTV.

Residue Cys-184 participates in (2R,3E)-phycocyanobilin binding. 3 consecutive PBS-linker domains span residues 241–421 (DLQG…FRTI), 482–665 (GAGI…KIEK), and 679–856 (SSLN…KQNR).

This sequence belongs to the phycobilisome linker protein family. Post-translationally, contains one covalently linked bilin chromophore. This protein autochromophorylates (Potential).

The protein resides in the plastid. It localises to the chloroplast thylakoid membrane. Its function is as follows. This protein is postulated to act both as terminal energy acceptor and as a linker polypeptide that stabilizes the phycobilisome architecture. May have intrinsic bilin lyase activity. This is Phycobiliprotein ApcE (apcE) from Cyanidium caldarium (Red alga).